The chain runs to 207 residues: LexA repressor (207 aa).

Positions 28-48 form a DNA-binding region, H-T-H motif; that stretch reads VREIGEAVGLASSSTVHGHLA. Residues Ser129 and Lys167 each act as for autocatalytic cleavage activity in the active site.

The protein belongs to the peptidase S24 family. Homodimer.

It catalyses the reaction Hydrolysis of Ala-|-Gly bond in repressor LexA.. Its function is as follows. Represses a number of genes involved in the response to DNA damage (SOS response), including recA and lexA. In the presence of single-stranded DNA, RecA interacts with LexA causing an autocatalytic cleavage which disrupts the DNA-binding part of LexA, leading to derepression of the SOS regulon and eventually DNA repair. In Bacillus licheniformis (strain ATCC 14580 / DSM 13 / JCM 2505 / CCUG 7422 / NBRC 12200 / NCIMB 9375 / NCTC 10341 / NRRL NRS-1264 / Gibson 46), this protein is LexA repressor.